We begin with the raw amino-acid sequence, 367 residues long: 2-aminoethylphosphonate--pyruvate transaminase (367 aa).

At Lys194 the chain carries N6-(pyridoxal phosphate)lysine.

The protein belongs to the class-V pyridoxal-phosphate-dependent aminotransferase family. PhnW subfamily. Homodimer. It depends on pyridoxal 5'-phosphate as a cofactor.

It carries out the reaction (2-aminoethyl)phosphonate + pyruvate = phosphonoacetaldehyde + L-alanine. Its function is as follows. Involved in phosphonate degradation. This is 2-aminoethylphosphonate--pyruvate transaminase from Salmonella dublin (strain CT_02021853).